The sequence spans 131 residues: Mesogenin-1 (131 aa).

The segment at 22-79 (EDRSFGDSASSPESESFDSACSSPDARSSPTAGCEHAEQQKPKVKMSMRRRMKASERE) is disordered. Residues 27–45 (GDSASSPESESFDSACSSP) are compositionally biased toward low complexity. The span at 63-73 (PKVKMSMRRRM) shows a compositional bias: basic residues. The 55-residue stretch at 70-124 (RRRMKASEREKLRMRSLAEALHQLRDYLPPGYSRRGQPLTKIQTLKYTIQYIKEL) folds into the bHLH domain.

Coexpression of ntl and spt is required for expression.

It localises to the nucleus. Functionally, involved in specifying the paraxial, but not dorsal, mesoderm. May regulate the expression of T-box transcription factors required for mesoderm formation and differentiation. The sequence is that of Mesogenin-1 (msgn1) from Danio rerio (Zebrafish).